A 456-amino-acid polypeptide reads, in one-letter code: tRNA-2-methylthio-N(6)-dimethylallyladenosine synthase (456 aa).

The MTTase N-terminal domain occupies 2–119 (KKVFIKTYGC…LPDLIAARRR (118 aa)). [4Fe-4S] cluster-binding residues include Cys11, Cys48, Cys82, Cys156, Cys160, and Cys163. The 234-residue stretch at 142 to 375 (RVDGASAYVS…QATIEENVAR (234 aa)) folds into the Radical SAM core domain. The TRAM domain maps to 378 to 448 (QGMVGSVQRI…PHSLRGEVAE (71 aa)).

It belongs to the methylthiotransferase family. MiaB subfamily. As to quaternary structure, monomer. Requires [4Fe-4S] cluster as cofactor.

Its subcellular location is the cytoplasm. It catalyses the reaction N(6)-dimethylallyladenosine(37) in tRNA + (sulfur carrier)-SH + AH2 + 2 S-adenosyl-L-methionine = 2-methylsulfanyl-N(6)-dimethylallyladenosine(37) in tRNA + (sulfur carrier)-H + 5'-deoxyadenosine + L-methionine + A + S-adenosyl-L-homocysteine + 2 H(+). Its function is as follows. Catalyzes the methylthiolation of N6-(dimethylallyl)adenosine (i(6)A), leading to the formation of 2-methylthio-N6-(dimethylallyl)adenosine (ms(2)i(6)A) at position 37 in tRNAs that read codons beginning with uridine. The protein is tRNA-2-methylthio-N(6)-dimethylallyladenosine synthase of Ralstonia pickettii (strain 12J).